A 140-amino-acid polypeptide reads, in one-letter code: Relaxin-3 (140 aa).

The signal sequence occupies residues 1-26 (MAKRPLLLLLLAVWVLAGELWLRTEA). Cystine bridges form between Cys-36–Cys-127, Cys-48–Cys-140, and Cys-126–Cys-131. Positions 56 to 116 (SDMLAHEALG…RTPGALRGSR (61 aa)) are cleaved as a propeptide — connecting peptide.

It belongs to the insulin family. As to quaternary structure, heterodimer of a B chain and an A chain linked by two disulfide bonds.

It is found in the secreted. Functionally, may play a role in neuropeptide signaling processes. Ligand for LGR7, RXFP3 and RXFP4. This Sus scrofa (Pig) protein is Relaxin-3 (RLN3).